We begin with the raw amino-acid sequence, 106 residues long: L-rhamnose mutarotase (106 aa).

Tyr20 contacts substrate. His24 acts as the Proton donor in catalysis. Substrate contacts are provided by residues Tyr43 and Trp78–Trp79.

It belongs to the rhamnose mutarotase family. In terms of assembly, homodimer.

It is found in the cytoplasm. The catalysed reaction is alpha-L-rhamnose = beta-L-rhamnose. It functions in the pathway carbohydrate metabolism; L-rhamnose metabolism. Functionally, involved in the anomeric conversion of L-rhamnose. In Rhizobium etli (strain ATCC 51251 / DSM 11541 / JCM 21823 / NBRC 15573 / CFN 42), this protein is L-rhamnose mutarotase.